A 203-amino-acid chain; its full sequence is Holliday junction branch migration complex subunit RuvA (203 aa).

The segment at 1-64 is domain I; the sequence is MIGRLRGIIL…EDAQLLYGFN (64 aa). The segment at 65 to 142 is domain II; it reads NKQERTLFKE…KGLHGDLFTP (78 aa). Residues 143–154 form a flexible linker region; sequence AVDLVLTSPASP. A domain III region spans residues 155–203; sequence TSEDAEQEAVAALVALGYKPQEASRMVSKIARPDASSETLIRDALRAAL.

This sequence belongs to the RuvA family. In terms of assembly, homotetramer. Forms an RuvA(8)-RuvB(12)-Holliday junction (HJ) complex. HJ DNA is sandwiched between 2 RuvA tetramers; dsDNA enters through RuvA and exits via RuvB. An RuvB hexamer assembles on each DNA strand where it exits the tetramer. Each RuvB hexamer is contacted by two RuvA subunits (via domain III) on 2 adjacent RuvB subunits; this complex drives branch migration. In the full resolvosome a probable DNA-RuvA(4)-RuvB(12)-RuvC(2) complex forms which resolves the HJ.

It is found in the cytoplasm. Functionally, the RuvA-RuvB-RuvC complex processes Holliday junction (HJ) DNA during genetic recombination and DNA repair, while the RuvA-RuvB complex plays an important role in the rescue of blocked DNA replication forks via replication fork reversal (RFR). RuvA specifically binds to HJ cruciform DNA, conferring on it an open structure. The RuvB hexamer acts as an ATP-dependent pump, pulling dsDNA into and through the RuvAB complex. HJ branch migration allows RuvC to scan DNA until it finds its consensus sequence, where it cleaves and resolves the cruciform DNA. This chain is Holliday junction branch migration complex subunit RuvA, found in Salmonella agona (strain SL483).